A 308-amino-acid polypeptide reads, in one-letter code: Maspardin (308 aa).

Positions Phe-87 to Met-159 constitute an AB hydrolase-1 domain. Ser-304 carries the phosphoserine modification.

Belongs to the AB hydrolase superfamily. As to quaternary structure, interacts with CD4. Interacts with ALDH16A1.

The protein resides in the cytoplasm. Its function is as follows. May play a role as a negative regulatory factor in CD4-dependent T-cell activation. This is Maspardin (SPG21) from Pongo abelii (Sumatran orangutan).